A 717-amino-acid polypeptide reads, in one-letter code: Inhibitor of nuclear factor kappa-B kinase subunit epsilon (717 aa).

The Protein kinase domain occupies 9 to 315; the sequence is WHTDDLLGQG…LQRTVIHVFS (307 aa). 15-23 provides a ligand contact to ATP; the sequence is LGQGATASV. A Glycyl lysine isopeptide (Lys-Gly) (interchain with G-Cter in ubiquitin) cross-link involves residue K30. K38 is an ATP binding site. Catalysis depends on D135, which acts as the Proton acceptor. S172 bears the Phosphoserine; by autocatalysis and IKKB mark. K231 participates in a covalent cross-link: Glycyl lysine isopeptide (Lys-Gly) (interchain with G-Cter in SUMO1). An interaction with DDX3X region spans residues 385–650; the sequence is SSDTPKGLAF…AQESLNKIFD (266 aa). K403 is covalently cross-linked (Glycyl lysine isopeptide (Lys-Gly) (interchain with G-Cter in ubiquitin)). Residues 452–473 are leucine-zipper; the sequence is LQDTCQQTLEVTRTALLYLSSS. T503 is subject to Phosphothreonine. S665 is subject to Phosphoserine.

This sequence belongs to the protein kinase superfamily. Ser/Thr protein kinase family. I-kappa-B kinase subfamily. As to quaternary structure, homodimer. Interacts with MAVS/IPS1. Interacts (via protein kinase domain) with TTLL12 (via N-terminus); the interaction prevents MAVS binding to IKBKE. Interacts with the adapter proteins AZI2/NAP1, TANK and TBKBP1/SINTBAD. Interacts with SIKE1. Interacts with TICAM1/TRIF, IRF3 and RIGI; interactions are disrupted by the interaction between IKBKE and SIKE1. Interacts with TOPORS; induced by DNA damage. Interacts with CYLD, IKBKB, IKBKG and MYD88. Interacts with IFIH1. Interacts with DDX3X; the interaction may be induced upon virus infection. Interacts with TRIM6 (via SPRY box). Interacts with unanchored K48-linked polyubiquitin chains; this leads to IKBKE activation. Interacts with TBK1. Interacts with FKBP5. Post-translationally, sumoylation by TOPORS upon DNA damage is required for protection of cells against DNA damage-induced cell death. Desumoylated by SENP1. In terms of processing, autophosphorylated and phosphorylated by IKBKB/IKKB. Phosphorylation at Ser-172 is enhanced by the interaction with DDX3X. Phosphorylated at Thr-503 upon IFN activation. 'Lys-63'-linked polyubiquitinated at Lys-30 and Lys-403 by TRAF2:BIRC2 and TRAF2:BIRC3 complexes. Ubiquitination is induced by LPS, TNFA and interleukin-1 and required for full kinase activity and KF-kappa-B pathway activation. In terms of tissue distribution, expressed in bone marrow-derived macrophages and at low levels in liver and white adipose tissue (at protein level). Detected in muscle and lung.

It is found in the cytoplasm. The protein resides in the nucleus. It localises to the PML body. It catalyses the reaction L-seryl-[I-kappa-B protein] + ATP = O-phospho-L-seryl-[I-kappa-B protein] + ADP + H(+). Its activity is regulated as follows. Kinase activity is inhibited competitively by amlexanox. In terms of biological role, serine/threonine kinase that plays an essential role in regulating inflammatory responses to viral infection, through the activation of the type I IFN, NF-kappa-B and STAT signaling. Also involved in TNFA and inflammatory cytokines, like Interleukin-1, signaling. Following activation of viral RNA sensors, such as RIG-I-like receptors, associates with DDX3X and phosphorylates interferon regulatory factors (IRFs), IRF3 and IRF7, as well as DDX3X. This activity allows subsequent homodimerization and nuclear translocation of the IRF3 leading to transcriptional activation of pro-inflammatory and antiviral genes including IFNB. In order to establish such an antiviral state, IKBKE forms several different complexes whose composition depends on the type of cell and cellular stimuli. Thus, several scaffolding molecules including IPS1/MAVS, TANK, AZI2/NAP1 or TBKBP1/SINTBAD can be recruited to the IKBKE-containing-complexes. Activated by polyubiquitination in response to TNFA and interleukin-1, regulates the NF-kappa-B signaling pathway through, at least, the phosphorylation of CYLD. Phosphorylates inhibitors of NF-kappa-B thus leading to the dissociation of the inhibitor/NF-kappa-B complex and ultimately the degradation of the inhibitor. In addition, is also required for the induction of a subset of ISGs which displays antiviral activity, may be through the phosphorylation of STAT1 at 'Ser-708'. Phosphorylation of STAT1 at 'Ser-708' also seems to promote the assembly and DNA binding of ISGF3 (STAT1:STAT2:IRF9) complexes compared to GAF (STAT1:STAT1) complexes, in this way regulating the balance between type I and type II IFN responses. Protects cells against DNA damage-induced cell death. Also plays an important role in energy balance regulation by sustaining a state of chronic, low-grade inflammation in obesity, wich leads to a negative impact on insulin sensitivity. Phosphorylates AKT1. This chain is Inhibitor of nuclear factor kappa-B kinase subunit epsilon (Ikbke), found in Mus musculus (Mouse).